A 185-amino-acid chain; its full sequence is Elongation factor P (185 aa).

The protein belongs to the elongation factor P family.

It is found in the cytoplasm. The protein operates within protein biosynthesis; polypeptide chain elongation. Involved in peptide bond synthesis. Stimulates efficient translation and peptide-bond synthesis on native or reconstituted 70S ribosomes in vitro. Probably functions indirectly by altering the affinity of the ribosome for aminoacyl-tRNA, thus increasing their reactivity as acceptors for peptidyl transferase. The polypeptide is Elongation factor P (Dictyoglomus thermophilum (strain ATCC 35947 / DSM 3960 / H-6-12)).